A 130-amino-acid polypeptide reads, in one-letter code: Small ribosomal subunit protein uS9 (130 aa).

Residues 109–130 form a disordered region; the sequence is RVKERKKYGQKGARAKFQFSKR.

This sequence belongs to the universal ribosomal protein uS9 family.

This Desulfotalea psychrophila (strain LSv54 / DSM 12343) protein is Small ribosomal subunit protein uS9.